We begin with the raw amino-acid sequence, 898 residues long: MSKLVIVESPTKARTIRNYLPQDYRVEASMGHVRDLPASAEEVPAAYKDKSWANLGVNVEDHFSPLYVIPKSKKKVVKELQTALKNADEVILATDEDREGESISWHLLQLLQPKVPIKRMVFHEITQEAIRSALENCRDIDENLVHAQETRRILDRLVGYTLSPLLWKKIAWGLSAGRVQSVAVRLIVQRERARRAFKTAGYWDLKAELEQNKNPFQAKLMTLGGTKLANGSDFDPNTGALLPDKQVVVLDEAQAIALKERLTGKPWAVVNTEEKPGVRKPSPPFTTSTLQQEANRKLGISARDTMRVAQKLYEEGYITYMRTDSVHLSDQAVTAARNCVQQMYGKEYLSPQPKQYTTKSKGAQEAHEAIRPAGTEFRIPNQTGLKDRELALYELIWKRTVACQMADARITQLSVLLKVEDAEFRAAGKRIDFPGYFRAYVEGSDDPDAALENQEVILPPLKVGDRPNCREIDTVGHETQPPARYTEASLVKTLESEGVGRPSTYASIIGTIIDRGYVQMRSKALTPTFTAFAVVSLLESHFPDLVDTGFTSRMEQKLDEIAIGKTQWLPYLQGFFLGESGLENQVKVRQDQIDPAIAKAIELENLAAKVKIGKFGPYIEIPQGEEIITASIPQDLTPADLNPEQVAVLLKQKTEGPDKVGIHPETGEPIFILIGAYGPYVQLGEATEENKKPKRTSLPKGVKPEDVTLEMAVGLLALPRNLGEHPESGKNIKASLGRFGPYVVHDQGKDGKDYRSLKGDDDVLTITLERALELLAEPKRGRGSRTPLKQLGLHPEDQEPVNLFKGPYGVYIKHGKVNASLPEGETEETITLEKALPLLAEKAGSGKKTSRKKATTTAKGTKKTTSKKASATGTAKKTTTKRTTRKKAASPDQSSEAG.

In terms of domain architecture, Toprim spans 2–126 (SKLVIVESPT…IKRMVFHEIT (125 aa)). Mg(2+) is bound by residues glutamate 8 and aspartate 95. A Topo IA-type catalytic domain is found at 141–583 (DENLVHAQET…GFFLGESGLE (443 aa)). An interaction with DNA region spans residues 175 to 180 (SAGRVQ). Tyrosine 320 functions as the O-(5'-phospho-DNA)-tyrosine intermediate in the catalytic mechanism. The segment at 840 to 898 (AEKAGSGKKTSRKKATTTAKGTKKTTSKKASATGTAKKTTTKRTTRKKAASPDQSSEAG) is disordered. Residues 848-866 (KTSRKKATTTAKGTKKTTS) are compositionally biased toward basic residues. Over residues 867-877 (KKASATGTAKK) the composition is skewed to low complexity. Residues 878–888 (TTTKRTTRKKA) show a composition bias toward basic residues.

Belongs to the type IA topoisomerase family. In terms of assembly, monomer. The cofactor is Mg(2+).

It carries out the reaction ATP-independent breakage of single-stranded DNA, followed by passage and rejoining.. Its function is as follows. Releases the supercoiling and torsional tension of DNA, which is introduced during the DNA replication and transcription, by transiently cleaving and rejoining one strand of the DNA duplex. Introduces a single-strand break via transesterification at a target site in duplex DNA. The scissile phosphodiester is attacked by the catalytic tyrosine of the enzyme, resulting in the formation of a DNA-(5'-phosphotyrosyl)-enzyme intermediate and the expulsion of a 3'-OH DNA strand. The free DNA strand then undergoes passage around the unbroken strand, thus removing DNA supercoils. Finally, in the religation step, the DNA 3'-OH attacks the covalent intermediate to expel the active-site tyrosine and restore the DNA phosphodiester backbone. The chain is DNA topoisomerase 1 from Synechocystis sp. (strain ATCC 27184 / PCC 6803 / Kazusa).